Consider the following 529-residue polypeptide: Auxin response factor 13 (529 aa).

Positions 1–22 are disordered; sequence MARPPAATAPPPPPPPPPPPPP. Positions 7–22 are enriched in pro residues; it reads ATAPPPPPPPPPPPPP. A DNA-binding region (TF-B3) is located at residues 128 to 234; it reads YAKQLTQSDA…KLLVGVRRAA (107 aa). Disordered regions lie at residues 443–462 and 497–529; these read IVTP…PLSA and PEGV…GARL. Over residues 444–461 the composition is skewed to polar residues; it reads VTPQNGSPPDNPVNTPLS. Over residues 499–510 the composition is skewed to acidic residues; it reads GVDDETATEEAS. Positions 511–523 are enriched in polar residues; sequence DTSLPDSLTNGHN.

This sequence belongs to the ARF family. In terms of assembly, homo and heterodimers. In terms of tissue distribution, expressed in roots, culms, leaves and young panicles.

The protein localises to the nucleus. In terms of biological role, auxin response factors (ARFs) are transcriptional factors that bind specifically to the DNA sequence 5'-TGTCTC-3' found in the auxin-responsive promoter elements (AuxREs). This Oryza sativa subsp. japonica (Rice) protein is Auxin response factor 13 (ARF13).